Here is a 556-residue protein sequence, read N- to C-terminus: Formate--tetrahydrofolate ligase (556 aa).

65–72 (TPAGEGKS) is a binding site for ATP.

Belongs to the formate--tetrahydrofolate ligase family.

It catalyses the reaction (6S)-5,6,7,8-tetrahydrofolate + formate + ATP = (6R)-10-formyltetrahydrofolate + ADP + phosphate. It functions in the pathway one-carbon metabolism; tetrahydrofolate interconversion. This is Formate--tetrahydrofolate ligase from Streptococcus agalactiae serotype III (strain NEM316).